The sequence spans 206 residues: Ribosomal RNA large subunit methyltransferase E (206 aa).

S-adenosyl-L-methionine-binding residues include glycine 63, tryptophan 65, aspartate 83, aspartate 99, and aspartate 124. The active-site Proton acceptor is lysine 164.

This sequence belongs to the class I-like SAM-binding methyltransferase superfamily. RNA methyltransferase RlmE family.

It localises to the cytoplasm. It carries out the reaction uridine(2552) in 23S rRNA + S-adenosyl-L-methionine = 2'-O-methyluridine(2552) in 23S rRNA + S-adenosyl-L-homocysteine + H(+). Specifically methylates the uridine in position 2552 of 23S rRNA at the 2'-O position of the ribose in the fully assembled 50S ribosomal subunit. In Buchnera aphidicola subsp. Schizaphis graminum (strain Sg), this protein is Ribosomal RNA large subunit methyltransferase E.